The primary structure comprises 415 residues: Protein CDC73 homolog (415 aa).

The protein belongs to the CDC73 family. As to quaternary structure, component of the nuclear PAF1 complex (PAF1C), which consists of VIP2/ELF7/PAF1, VIP3/SKI8/WDR61, VIP4/LEO1, VIP5/RTF1, VIP6/ELF8/CTR9 and CDC73. As to expression, expressed in root tips, shoot apex, young leaves and flowers, especially in stamen filaments and carpels.

It localises to the nucleus. Component of the PAF1 complex (PAF1C) which is involved in histone modifications such as methylation on histone H3 'Lys-4' (H3K4me3). Involved in regulation of flowering time. Required for the expression of the flowering repressors FLC and MADS-box genes of the MAF family. Required for histone H3 trimethylation on 'Lys-4' (H3K4me3) at the FLC locus. Prevents trimethylation on 'Lys-27' (H3K27me3) at the same locus. The chain is Protein CDC73 homolog from Arabidopsis thaliana (Mouse-ear cress).